The following is a 166-amino-acid chain: 2-amino-4-hydroxy-6-hydroxymethyldihydropteridine pyrophosphokinase (166 aa).

This sequence belongs to the HPPK family.

It carries out the reaction 6-hydroxymethyl-7,8-dihydropterin + ATP = (7,8-dihydropterin-6-yl)methyl diphosphate + AMP + H(+). Its pathway is cofactor biosynthesis; tetrahydrofolate biosynthesis; 2-amino-4-hydroxy-6-hydroxymethyl-7,8-dihydropteridine diphosphate from 7,8-dihydroneopterin triphosphate: step 4/4. In terms of biological role, catalyzes the transfer of pyrophosphate from adenosine triphosphate (ATP) to 6-hydroxymethyl-7,8-dihydropterin, an enzymatic step in folate biosynthesis pathway. The polypeptide is 2-amino-4-hydroxy-6-hydroxymethyldihydropteridine pyrophosphokinase (folK) (Streptococcus pyogenes serotype M6 (strain ATCC BAA-946 / MGAS10394)).